Consider the following 4579-residue polypeptide: METKENRWVPVTVLPGCVGCRTVAALASWTVRDVKERIFAETGFPVSEQRLWRGGRELSDWIKIGDLTSKNCHLFVNLQSKGLKGGGRFGQTTPPLVDFLKDILRRYPEGGQILKELIQNAEDAGATEVKFLYDETQYGTETLWSKDMAPYQGPALYVYNNAVFTPEDWHGIQEIARSRKKDDPLKVGRFGIGFNSVYHITDVPCIFSGDQIGMLDPHQTLFGPHESGQCWNLKDDSKEISELSDQFAPFVGIFGSTKETFINGNFPGTFFRFPLRLQPSQLSSNLYNKQKVLELFESFRADADTVLLFLKSVQDVSLYVREADGTEKLVFRVTSSESKALKHERPNSIKILGTAISNYCKKTPSNNITCVTYHVNIVLEEESTKDAQKTSWLVCNSVGGRGISSKLDSLADELKFVPIIGIAMPLSSRDDEAKGATSDFSGKAFCFLPLPPGEESSTGLPVHISGFFGLTDNRRSIKWRELDQWRDPAALWNEFLVMNVVPKAYATLILDSIKRLEMEKSSDFPLSVDVIYKLWPEASKVKVHWQPVLEPLFSELLQNAVIYSISCDWVRLEQVYFSELDENLEYTKTVLNYLQSSGKQIAKVPGNVDAAVQLTAASGTTPVRKVTPAWVRQVLRKCAHLGCAEEKLHLLEFVLSDQAYSELLGLELLPLQNGNFVPFSSSVSDQDVIYITSAEYPRSLFPSLEGRFILDNLKPHLVAALKEAAQTRGRPCTQLQLLNPERFARLIKEVMNTFWPGRELIVQWYPFDENRNHPSVSWLKMVWKNLYIHFSEDLTLFDEMPLIPRTILEEGQTCVELIRLRIPSLVILDDESEAQLPEFLADIVQKLGGFVLKKLDASIQHPLIKKYIHSPLPSAVLQIMEKMPLQKLCNQITSLLPTHKDALRKFLASLTDSSEKEKRIIQELAIFKRINHSSDQGISSYTKLKGCKVLHHTAKLPADLRLSISVIDSSDEATIRLANMLKIEQLKTTSCLKLVLKDIENAFYSHEEVTQLMLWVLENLSSLKNENPNVLEWLTPLKFIQISQEQMVSAGELFDPDIEVLKDLFCNEEGTYFPPSVFTSPDILHSLRQIGLKNEASLKEKDVVQVAKKIEALQVGACPDQDVLLKKAKTLLLVLNKNHTLLQSSEGKMTLKKIKWVPACKERPPNYPGSLVWKGDLCNLCAPPDMCDVGHAILIGSSLPLVESIHVNLEKALGIFTKPSLSAVLKHFKIVVDWYSSKTFSDEDYYQFQHILLEIYGFMHDHLNEGKDSFRALKFPWVWTGKKFCPLAQAVIKPIHDLDLQPYLHNVPKTMAKFHQLFKVCGSIEELTSDHISMVIQKIYLKSDQDLSEQESKQNLHLMLNIIRWLYSNQIPASPNTPVPIHHSKNPSKLIMKPIHECCYCDIKVDDLNDLLEDSVEPIILVHEDIPMKTAEWLKVPCLSTRLINPENMGFEQSGQREPLTVRIKNILEEYPSVSDIFKELLQNADDANATECSFLIDMRRNMDIRENLLDPGMAACHGPALWSFNNSQFSDSDFVNITRLGESLKRGEVDKVGKFGLGFNSVYHITDIPIIMSREFMIMFDPNINHISKHIKDKSNPGIKINWSKQQKRLRKFPNQFKPFIDVFGCQLPLTVEAPYSYNGTLFRLSFRTQQEAKVSEVSSTCYNTADIYSLVDEFSLCGHRLIIFTQSVKSMYLKYLKIEETNPSLAQDTVIIKKKSCSSKALNTPVLSVLKEAAKLMKTCSSSNKKLPSDEPKSSCILQITVEEFHHVFRRIADLQSPLFRGPDDDPAALFEMAKSGQSKKPSDELSQKTVECTTWLLCTCMDTGEALKFSLSESGRRLGLVPCGAVGVQLSEIQDQKWTVKPHIGEVFCYLPLRIKTGLPVHINGCFAVTSNRKEIWKTDTKGRWNTTFMRHVIVKAYLQVLSVLRDLATSGELMDYTYYAVWPDPDLVHDDFSVICQGFYEDIAHGKGKELTKVFSDGSTWVSMKNVRFLDDSILKRRDVGSAAFKIFLKYLKKTGSKNLCAVELPSSVKLGFEEAGCKQILLENTFSEKQFFSEVFFPNIQEIEAELRDPLMIFVLNEKVDEFSGVLRVTPCIPCSLEGHPLVLPSRLIHPEGRVAKLFDIKDGRFPYGSTQDYLNPIILIKLVQLGMAKDDILWDDMLERAVSVAEINKSDHVAACLRSSILLSLIDEKLKIRDPRAKDFAAKYQTIRFLPFLTKPAGFSLDWKGNSFKPETMFAATDLYTAEHQDIVCLLQPILNENSHSFRGCGSVSLAVKEFLGLLKKPTVDLVINQLKEVAKSVDDGITLYQENITNACYKYLHEALMQNEITKMSIIDKLKPFSFILVENAYVDSEKVSFHLNFEAAPYLYQLPNKYKNNFRELFETVGVRQSCTVEDFALVLESIDQERGTKQITEENFQLCRRIISEGIWSLIREKKQEFCEKNYGKILLPDTNLMLLPAKSLCYNDCPWIKVKDTTVKYCHADIPREVAVKLGAVPKRHKALERYASNVCFTTLGTEFGQKEKLTSRIKSILNAYPSEKEMLKELLQNADDAKATEICFVFDPRQHPVDRIFDDKWAPLQGPALCVYNNQPFTEDDVRGIQNLGKGTKEGNPYKTGQYGIGFNSVYHITDCPSFISGNDILCIFDPHARYAPGATSISPGRMFRDLDADFRTQFSDVLDLYLGTHFKLDNCTMFRFPLRNAEMAKVSEISSVPASDRMVQNLLDKLRSDGAELLMFLNHMEKISICEIDKSTGALNVLYSVKGKITDGDRLKRKQFHASVIDSVTKKRQLKDIPVQQITYTMDTEDSEGNLTTWLICNRSGFSSMEKVSKSVISAHKNQDITLFPRGGVAACITHNYKKPHRAFCFLPLSLETGLPFHVNGHFALDSARRNLWRDDNGVGVRSDWNNSLMTALIAPAYVELLIQLKKRYFPGSDPTLSVLQNTPIHVVKDTLKKFLSFFPVNRLDLQPDLYCLVKALYNCIHEDMKRLLPVVRAPNIDGSDLHSAVIITWINMSTSNKTRPFFDNLLQDELQHLKNADYNITTRKTVAENVYRLKHLLLEIGFNLVYNCDETANLYHCLIDADIPVSYVTPADIRSFLMTFSSPDTNCHIGKLPCRLQQTNLKLFHSLKLLVDYCFKDAEENEIEVEGLPLLITLDSVLQTFDAKRPKFLTTYHELIPSRKDLFMNTLYLKYSNILLNCKVAKVFDISSFADLLSSVLPREYKTKSCTKWKDNFASESWLKNAWHFISESVSVKEDQEETKPTFDIVVDTLKDWALLPGTKFTVSANQLVVPEGDVLLPLSLMHIAVFPNAQSDKVFHALMKAGCIQLALNKICSKDSAFVPLLSCHTANIESPTSILKALHYMVQTSTFRAEKLVENDFEALLMYFNCNLNHLMSQDDIKILKSLPCYKSISGRYVSIGKFGTCYVLTKSIPSAEVEKWTQSSSSAFLEEKIHLKELYEVIGCVPVDDLEVYLKHLLPKIENLSYDAKLEHLIYLKNRLSSAEELSEIKEQLFEKLESLLIIHDANSRLKQAKHFYDRTVRVFEVMLPEKLFIPNDFFKKLEQLIKPKNHVTFMTSWVEFLRNIGLKYILSQQQLLQFAKEISVRANTENWSKETLQNTVDILLHHIFQERMDLLSGNFLKELSLIPFLCPERAPAEFIRFHPQYQEVNGTLPLIKFNGAQVNPKFKQCDVLQLLWTSCPILPEKATPLSIKEQEGSDLGPQEQLEQVLNMLNVNLDPPLDKVINNCRNICNITTLDEEMVKTRAKVLRSIYEFLSAEKREFRFQLRGVAFVMVEDGWKLLKPEEVVINLEYESDFKPYLYKLPLELGTFHQLFKHLGTEDIISTKQYVEVLSRIFKNSEGKQLDPNEMRTVKRVVSGLFRSLQNDSVKVRSDLENVRDLALYLPSQDGRLVKSSILVFDDAPHYKSRIQGNIGVQMLVDLSQCYLGKDHGFHTKLIMLFPQKLRPRLLSSILEEQLDEETPKVCQFGALCSLQGRLQLLLSSEQFITGLIRIMKHENDNAFLANEEKAIRLCKALREGLKVSCFEKLQTTLRVKGFNPIPHSRSETFAFLKRFGNAVILLYIQHSDSKDINFLLALAMTLKSATDNLISDTSYLIAMLGCNDIYRIGEKLDSLGVKYDSSEPSKLELPMPGTPIPAEIHYTLLMDPMNVFYPGEYVGYLVDAEGGDIYGSYQPTYTYAIIVQEVEREDADNSSFLGKIYQIDIGYSEYKIVSSLDLYKFSRPEESSQSRDSAPSTPTSPTEFLTPGLRSIPPLFSGRESHKTSSKHQSPKKLKVNSLPEILKEVTSVVEQAWKLPESERKKIIRRLYLKWHPDKNPENHDIANEVFKHLQNEINRLEKQAFLDQNADRASRRTFSTSASRFQSDKYSFQRFYTSWNQEATSHKSERQQQNKEKCPPSAGQTYSQRFFVPPTFKSVGNPVEARRWLRQARANFSAARNDLHKNANEWVCFKCYLSTKLALIAADYAVRGKSDKDVKPTALAQKIEEYSQQLEGLTNDVHTLEAYGVDSLKTRYPDLLPFPQIPNDRFTSEVAMRVMECTACIIIKLENFMQQKV.

Residues 9–84 (VPVTVLPGCV…FVNLQSKGLK (76 aa)) form the Ubiquitin-like domain. Lysine 943 bears the N6-acetyllysine mark. Residues serine 1779 and serine 2511 each carry the phosphoserine modification. Threonine 2516 carries the post-translational modification Phosphothreonine. A Phosphoserine modification is found at serine 3435. Disordered stretches follow at residues 4248 to 4273 (PEESSQSRDSAPSTPTSPTEFLTPGL) and 4279 to 4298 (LFSGRESHKTSSKHQSPKKL). Residues 4254–4267 (SRDSAPSTPTSPTE) show a composition bias toward polar residues. At threonine 4261 the chain carries Phosphothreonine. Position 4264 is a phosphoserine (serine 4264). Over residues 4288 to 4298 (TSSKHQSPKKL) the composition is skewed to basic residues. One can recognise a J domain in the interval 4306–4393 (ILKEVTSVVE…ASRFQSDKYS (88 aa)). The disordered stretch occupies residues 4405–4427 (ATSHKSERQQQNKEKCPPSAGQT). The segment covering 4406-4420 (TSHKSERQQQNKEKC) has biased composition (basic and acidic residues). Positions 4451–4567 (LRQARANFSA…MRVMECTACI (117 aa)) constitute an HEPN domain.

As to expression, highly expressed in the central nervous system. Also found in skeletal muscle and at low levels in pancreas.

It is found in the cytoplasm. Functionally, co-chaperone which acts as a regulator of the Hsp70 chaperone machinery and may be involved in the processing of other ataxia-linked proteins. The polypeptide is Sacsin (SACS) (Homo sapiens (Human)).